A 180-amino-acid polypeptide reads, in one-letter code: Large ribosomal subunit protein uL5 (180 aa).

It belongs to the universal ribosomal protein uL5 family. In terms of assembly, part of the 50S ribosomal subunit; part of the 5S rRNA/L5/L18/L25 subcomplex. Contacts the 5S rRNA and the P site tRNA. Forms a bridge to the 30S subunit in the 70S ribosome.

Its function is as follows. This is one of the proteins that bind and probably mediate the attachment of the 5S RNA into the large ribosomal subunit, where it forms part of the central protuberance. In the 70S ribosome it contacts protein S13 of the 30S subunit (bridge B1b), connecting the 2 subunits; this bridge is implicated in subunit movement. Contacts the P site tRNA; the 5S rRNA and some of its associated proteins might help stabilize positioning of ribosome-bound tRNAs. The polypeptide is Large ribosomal subunit protein uL5 (Oenococcus oeni (strain ATCC BAA-331 / PSU-1)).